Here is a 281-residue protein sequence, read N- to C-terminus: uncharacterized protein (281 aa).

The next 3 helical transmembrane spans lie at 23 to 45 (LLLSYIINLISSIIILIIGFFAA), 65 to 87 (IANFLAALVRYIIITFALIASLG), and 94 to 116 (TSVIAILGAAGMAIGLALQGSLS).

This sequence belongs to the MscS (TC 1.A.23) family.

It localises to the cell membrane. This is an uncharacterized protein from Buchnera aphidicola subsp. Baizongia pistaciae (strain Bp).